A 20-amino-acid chain; its full sequence is Chrysophsin-3 (20 aa).

His-20 is modified (histidine amide).

As to expression, gill.

It localises to the secreted. In terms of biological role, has antibacterial activity against Gram-positive bacteria B.subtilis ATCC 6633, L.garvieae ATCC 49156 and S.iniae F-8502, and Gram-negative bacteria E.coli WT-2, V.anguillarum ATCC 19264, V.penaeicida KHA, V.harveyi ATCC 14126, V.vulnificus ATCC 33148, A.salmonicida NCMB 1102 and P.putida ATCC 12633. Has hemolytic activity against human red blood cells. Seems to disrupt the membranes by adopting an alpha helical conformation. May play a significant role in innate host defense. The protein is Chrysophsin-3 of Pagrus major (Red sea bream).